The chain runs to 410 residues: Lysosome-associated membrane glycoprotein 2 (410 aa).

The N-terminal stretch at 1 to 28 (MMCFRLSPVSGSGLVLSCLLLGAVQSYA) is a signal peptide. The segment at 29-192 (FELNLPDSKA…SKEEFVCEED (164 aa)) is first lumenal domain. The Lumenal segment spans residues 29–375 (FELNLPDSKA…QDCSADEDNF (347 aa)). Cys40 and Cys79 are disulfide-bonded. Residues Asn48, Asn58, Asn71, Asn75, Asn99, Asn119, Asn123, Asn179, Asn222, Asn229, Asn242, Asn260, Asn275, Asn300, Asn307, Asn317, and Asn356 are each glycosylated (N-linked (GlcNAc...) asparagine). Cys153 and Cys189 are disulfide-bonded. The hinge stretch occupies residues 193–228 (KSVTTVRPIIHTTVPPPTTTPTPLPPKVGNYSVSNG). The interval 229–375 (NATCLLATMG…QDCSADEDNF (147 aa)) is second lumenal domain. Cysteines 232 and 265 form a disulfide. An intrachain disulfide couples Cys331 to Cys368. The chain crosses the membrane as a helical span at residues 376-399 (LVPIAVGAALAGVLALVLLAYFIG). The Cytoplasmic portion of the chain corresponds to 400–410 (LKRHHTGYEQF). The important for binding and subsequent lysosomal degradation of target proteins stretch occupies residues 401–404 (KRHH).

Belongs to the LAMP family. Monomer. Forms large homooligomers. Interacts (via its cytoplasmic region) with HSPA8; HSPA8 mediates recruitment of proteins with a KFERQ motif to the surface of the lysosome for chaperone-mediated autophagy. Interacts with HSP90 in the lysosome lumen; this enhances LAMP2 stability. Interacts with MLLT11. Interacts with ABCB9. Interacts with FURIN. Interacts with CT55; this interaction may be important for LAMP2 protein stability. Interacts with TMEM175; inhibiting the proton channel activity of TMEM175. Forms a ternary complex with RAB7A and RUFY4 (via RUN domain); the interaction with RAB7A is mediated by RUFY4 (via RUN and coiled coil domains). Extensively N-glycosylated. Contains a minor proportion of O-linked glycans.

Its subcellular location is the lysosome membrane. It is found in the endosome membrane. It localises to the cell membrane. The protein resides in the cytoplasmic vesicle. The protein localises to the autophagosome membrane. Functionally, lysosomal membrane glycoprotein which plays an important role in lysosome biogenesis, lysosomal pH regulation and autophagy. Acts as an important regulator of lysosomal lumen pH regulation by acting as a direct inhibitor of the proton channel TMEM175, facilitating lysosomal acidification for optimal hydrolase activity. Plays an important role in chaperone-mediated autophagy, a process that mediates lysosomal degradation of proteins in response to various stresses and as part of the normal turnover of proteins with a long biological half-live. Functions by binding target proteins, such as GAPDH, NLRP3 and MLLT11, and targeting them for lysosomal degradation. In the chaperone-mediated autophagy, acts downstream of chaperones, such as HSPA8/HSC70, which recognize and bind substrate proteins and mediate their recruitment to lysosomes, where target proteins bind LAMP2. Plays a role in lysosomal protein degradation in response to starvation. Required for the fusion of autophagosomes with lysosomes during autophagy. Cells that lack LAMP2 express normal levels of VAMP8, but fail to accumulate STX17 on autophagosomes, which is the most likely explanation for the lack of fusion between autophagosomes and lysosomes. Required for normal degradation of the contents of autophagosomes. Required for efficient MHC class II-mediated presentation of exogenous antigens via its function in lysosomal protein degradation; antigenic peptides generated by proteases in the endosomal/lysosomal compartment are captured by nascent MHC II subunits. Is not required for efficient MHC class II-mediated presentation of endogenous antigens. The polypeptide is Lysosome-associated membrane glycoprotein 2 (LAMP2) (Cricetulus griseus (Chinese hamster)).